Consider the following 818-residue polypeptide: Protein Cep78 homolog (818 aa).

Disordered stretches follow at residues 513–589 (LDVE…HEFA), 691–748 (RQAN…TEAT), and 768–798 (KQSE…DQNV). The span at 514–539 (DVEEEEEEEEEEQQAEESQSESEPQN) shows a compositional bias: acidic residues. Basic and acidic residues predominate over residues 561 to 589 (VRSEIKYVENNPKEAAKKNRESKSDHEFA). Over residues 782 to 792 (GDAGGGGGSGD) the composition is skewed to gly residues.

It belongs to the CEP78 family.

Its subcellular location is the cytoplasm. It localises to the cytoskeleton. The protein localises to the microtubule organizing center. It is found in the centrosome. The protein resides in the centriole. Its subcellular location is the cilium basal body. May play a role in cilium biogenesis. In Drosophila melanogaster (Fruit fly), this protein is Protein Cep78 homolog.